The sequence spans 365 residues: MKAIAVEPGAGTPTLIDLPVPEPAPGEALVRTLRVGVDGTDDEVIAGAHGGVPDGDDRLVLGHEAVGVVEDANGTDLEEGQYVVPTVRRPPPGVETNVYFERGEPDMAPEGEYVERGIVGAHGFMAEYFTSPADCLVPISADLAPVGFLVEPISITEKAIEHAAATRSAFDWRPESVFVLGNGSLGLLTAAMFRTTMGYDRVYCLGRRDRPHPSIDILDELGVTYIDSRETPVPEVPEVYEPMDLVYEATGYAKHAFESIEALAPNGVAALLGVPNDWSFEVDGGRLHREMVLHNKAIVGSVNSNRDQFASAVDTLAGLPSWVIEDVVSGVYGLEEYERAFSDPTDDATADDDTTIKTAVEFSNI.

Aspartate 38 is a binding site for Zn(2+). Position 40 (threonine 40) interacts with substrate. Residues histidine 63 and glutamate 64 each coordinate Zn(2+). Substrate is bound by residues glutamate 115 and glutamate 151. Glutamate 151 is a Zn(2+) binding site. NADP(+) is bound by residues 182-185 (NGSL), 207-208 (RR), 272-274 (LGV), and 301-303 (SVN). Residue asparagine 303 participates in substrate binding.

The protein belongs to the zinc-containing alcohol dehydrogenase family. Glucose 1-dehydrogenase subfamily. Zn(2+) serves as cofactor.

It catalyses the reaction D-glucose + NAD(+) = D-glucono-1,5-lactone + NADH + H(+). The enzyme catalyses D-glucose + NADP(+) = D-glucono-1,5-lactone + NADPH + H(+). Catalyzes the NAD(P)(+)-dependent oxidation of D-glucose to D-gluconate via gluconolactone. Can utilize both NAD(+) and NADP(+) as electron acceptor. Is involved in the degradation of glucose through a modified Entner-Doudoroff pathway. This is Glucose 1-dehydrogenase 1 from Haloterrigena turkmenica (strain ATCC 51198 / DSM 5511 / JCM 9101 / NCIMB 13204 / VKM B-1734 / 4k) (Halococcus turkmenicus).